A 2407-amino-acid polypeptide reads, in one-letter code: Daf-12-interacting protein 1 (2407 aa).

Low complexity predominate over residues glutamine 90–alanine 112. A disordered region spans residues glutamine 90–arginine 152. The region spanning cysteine 277–asparagine 335 is the RRM domain. 11 disordered regions span residues glutamate 439 to aspartate 632, alanine 737 to leucine 767, leucine 785 to alanine 849, proline 874 to valine 896, leucine 921 to alanine 986, arginine 993 to valine 1012, serine 1025 to glutamate 1844, isoleucine 1858 to histidine 1918, leucine 1932 to aspartate 1976, glutamate 2077 to alanine 2103, and serine 2172 to asparagine 2200. The segment covering arginine 443–glycine 456 has biased composition (polar residues). Acidic residues predominate over residues glutamate 512–valine 529. Composition is skewed to basic and acidic residues over residues serine 530–lysine 541, glycine 548–glutamate 564, and serine 573–glutamate 586. The span at alanine 587–proline 603 shows a compositional bias: polar residues. A compositionally biased stretch (low complexity) spans serine 618–serine 627. 2 stretches are compositionally biased toward polar residues: residues threonine 791–serine 826 and serine 837–alanine 849. Residues alanine 924 to glycine 946 are compositionally biased toward polar residues. A compositionally biased stretch (basic and acidic residues) spans serine 966–isoleucine 978. Polar residues predominate over residues serine 1043 to glutamine 1052. A compositionally biased stretch (low complexity) spans proline 1053 to histidine 1070. The span at lysine 1086–lysine 1153 shows a compositional bias: basic and acidic residues. Residues serine 1165–aspartate 1177 are compositionally biased toward acidic residues. Basic and acidic residues-rich tracts occupy residues leucine 1178 to glutamine 1195, arginine 1218 to glutamine 1227, alanine 1279 to glutamate 1293, asparagine 1304 to asparagine 1320, glutamine 1335 to alanine 1355, and arginine 1376 to aspartate 1398. 2 stretches are compositionally biased toward low complexity: residues proline 1456–serine 1471 and threonine 1488–serine 1498. Polar residues predominate over residues serine 1534–glycine 1547. The span at serine 1570–aspartate 1595 shows a compositional bias: low complexity. Composition is skewed to basic and acidic residues over residues serine 1679–serine 1691 and glutamate 1703–glutamine 1726. Residues threonine 1749–glutamine 1770 are compositionally biased toward polar residues. Residues asparagine 1792–lysine 1805 are compositionally biased toward basic and acidic residues. Residues proline 1809 to histidine 1826 are compositionally biased toward polar residues. Basic and acidic residues-rich tracts occupy residues alanine 1827 to glutamate 1836 and glutamate 1873 to glutamate 1892. Polar residues-rich tracts occupy residues glutamate 1895–threonine 1911 and leucine 1932–glutamine 1942. Low complexity predominate over residues serine 1962–serine 1975. Positions asparagine 2049–alanine 2110 form a coiled coil. Basic and acidic residues predominate over residues glutamate 2077–arginine 2099. Low complexity predominate over residues proline 2176–proline 2186. One can recognise an SPOC domain in the interval glutamine 2213–asparagine 2383.

Isoform d interacts with daf-12. Isoform d is widely expressed: detected in the hypodermis, seam cells, intestine, somatic gonad, neurons, vulval precursors, body wall muscle and pharynx.

Its subcellular location is the nucleus. In terms of biological role, probable transcriptional corepressor which modulates activity of the nuclear hormone receptor daf-12 to regulate the dauer diapause. This Caenorhabditis elegans protein is Daf-12-interacting protein 1.